Consider the following 253-residue polypeptide: Triosephosphate isomerase (253 aa).

Residue asparagine 12–lysine 14 coordinates substrate. Histidine 100 serves as the catalytic Electrophile. Glutamate 170 serves as the catalytic Proton acceptor. Residues glycine 176, serine 215, and glycine 236–glycine 237 contribute to the substrate site.

This sequence belongs to the triosephosphate isomerase family. As to quaternary structure, homodimer.

Its subcellular location is the cytoplasm. The catalysed reaction is D-glyceraldehyde 3-phosphate = dihydroxyacetone phosphate. It functions in the pathway carbohydrate biosynthesis; gluconeogenesis. The protein operates within carbohydrate degradation; glycolysis; D-glyceraldehyde 3-phosphate from glycerone phosphate: step 1/1. Functionally, involved in the gluconeogenesis. Catalyzes stereospecifically the conversion of dihydroxyacetone phosphate (DHAP) to D-glyceraldehyde-3-phosphate (G3P). This is Triosephosphate isomerase from Rhodopseudomonas palustris (strain BisA53).